The following is a 92-amino-acid chain: Alpha-conotoxin-like Mi20.3 (92 aa).

The N-terminal stretch at 1 to 24 (MPKLEMMLLVLLILPLSYFSAAGG) is a signal peptide. Positions 25–45 (QVVQGDWRGDGLARYLQRGDR) are excised as a propeptide. 4-hydroxyproline is present on Pro55. Intrachain disulfides connect Cys63/Cys72, Cys68/Cys80, Cys73/Cys90, and Cys78/Cys92.

It belongs to the conotoxin D superfamily. In terms of assembly, hetero-, homo- or pseudo-homodimer (identical sequence, different post-translational modifications). Expressed by the venom duct.

The protein resides in the secreted. Its function is as follows. Alpha-conotoxins act on postsynaptic membranes, they bind to the nicotinic acetylcholine receptors (nAChR) and thus inhibit them. Through its two C-terminal domains, this homodimeric protein would bind to two nAChR allosteric sites, located outside the nAChR C-loop of the principal binding face and at the adjacent binding interface in a clockwise direction. This toxin specifically blocks mammalian neuronal nAChR of the alpha-7/CHRNA7, alpha-3-beta-2/CHRNA3-CHRNB2 and alpha-4-beta-2/CHRNA4-CHRNB2 subtypes. This is Alpha-conotoxin-like Mi20.3 from Conus miles (Soldier cone).